The chain runs to 237 residues: Golgi anti-apoptotic protein (237 aa).

The Cytoplasmic segment spans residues 1–37; the sequence is MAMPSLSACSSIEDDFNYGSSVASASVHIRMAFLRKV. The chain crosses the membrane as a helical span at residues 38–58; the sequence is YGILCLQFLLTTATTAVFLYF. The Lumenal segment spans residues 59-67; sequence DCMRTFIQG. Residues 68-88 form a helical membrane-spanning segment; it reads SPVLILASMFGSIGLIFALTL. Topologically, residues 89–94 are cytoplasmic; it reads HRHKHP. Residues 95–115 form a helical membrane-spanning segment; that stretch reads LNLYLLCGFTLSESLTLASVV. Position 116 (threonine 116) is a topological domain, lumenal. Residues 117–137 form a helical membrane-spanning segment; the sequence is FYDVHVVMQAFMLTTAAFLAL. The Cytoplasmic portion of the chain corresponds to 138–151; that stretch reads TTYTLQSKRDFSKL. A helical transmembrane segment spans residues 152–172; that stretch reads GAGLFAALWILILSGLLGIFV. Residues 173–174 lie on the Lumenal side of the membrane; the sequence is QN. The helical transmembrane segment at 175–195 threads the bilayer; it reads ETVKLVLSAFGALVFCGFIIY. Residues 196-209 are Cytoplasmic-facing; that stretch reads DTHSLIHKLSPEEY. The segment at residues 210–230 is an intramembrane region (helical); sequence VLASINLYLDIINLFLHLLQL. At 231-237 the chain is on the cytoplasmic side; sequence LEVSNKK.

The protein belongs to the BI1 family. LFG subfamily.

It localises to the host Golgi apparatus membrane. Its function is as follows. May affect virulence through inhibition of apoptosis. The sequence is that of Golgi anti-apoptotic protein (L6) from Vaccinia virus (strain LC16m0) (VACV).